The primary structure comprises 460 residues: MEFSEWYSDILEKAGIYDLRYPIKGCGVYLPYGFKIRRYSFEILRKLLDETNHDETLFPMLIPENLLAKEGEHIKGFEDEVFWVTHGGKTPLEVKLALRPTSETTMYYMMKQWIKVHTDLPMKLYQVVNTFRYETKHTRPLIRLREIMSFKEAHTAHATKEDCDAQITEALNLYGEFFDEICVPYIISKRPEWDKFPGADYTMAFDTIYPDGKTMQIGTVHNLGQNFAKTFELEFETPDGEKDFVYQTCYGISDRAIASLISVHGDEKGLVIPVDVAPIQIVLIPLLFKGKEEIVMDKIKELNRTLKSEFRVLLDDRDIRPGRKYNDWEIKGVPLRIELGPRDIENGQALIVRRDTGEKITVEYSNILEEVEKIVSMYKENLKIKADEKIKNFLTVVDFESDVNALSEKVKAALLENKGIILIPFDESVYNEEFEELIDASVLGQTTYEGKDYISVARTY.

This sequence belongs to the class-II aminoacyl-tRNA synthetase family. ProS type 3 subfamily. As to quaternary structure, homodimer.

The protein resides in the cytoplasm. The enzyme catalyses tRNA(Pro) + L-proline + ATP = L-prolyl-tRNA(Pro) + AMP + diphosphate. In terms of biological role, catalyzes the attachment of proline to tRNA(Pro) in a two-step reaction: proline is first activated by ATP to form Pro-AMP and then transferred to the acceptor end of tRNA(Pro). The polypeptide is Proline--tRNA ligase (Methanococcus maripaludis (strain C6 / ATCC BAA-1332)).